The chain runs to 302 residues: 33 kDa chaperonin (302 aa).

Disulfide bonds link cysteine 234–cysteine 236 and cysteine 267–cysteine 270.

Belongs to the HSP33 family. Post-translationally, under oxidizing conditions two disulfide bonds are formed involving the reactive cysteines. Under reducing conditions zinc is bound to the reactive cysteines and the protein is inactive.

Its subcellular location is the cytoplasm. In terms of biological role, redox regulated molecular chaperone. Protects both thermally unfolding and oxidatively damaged proteins from irreversible aggregation. Plays an important role in the bacterial defense system toward oxidative stress. This is 33 kDa chaperonin from Neisseria meningitidis serogroup A / serotype 4A (strain DSM 15465 / Z2491).